The following is a 178-amino-acid chain: Ribosome maturation factor RimP (178 aa).

It belongs to the RimP family.

It is found in the cytoplasm. Required for maturation of 30S ribosomal subunits. This Streptococcus pyogenes serotype M5 (strain Manfredo) protein is Ribosome maturation factor RimP.